The sequence spans 1215 residues: DNA-directed RNA polymerase subunit beta' (1215 aa).

Cys60, Cys62, Cys75, and Cys78 together coordinate Zn(2+). Positions 449, 451, and 453 each coordinate Mg(2+). Positions 818, 892, 899, and 902 each coordinate Zn(2+).

It belongs to the RNA polymerase beta' chain family. In terms of assembly, the RNAP catalytic core consists of 2 alpha, 1 beta, 1 beta' and 1 omega subunit. When a sigma factor is associated with the core the holoenzyme is formed, which can initiate transcription. Mg(2+) is required as a cofactor. Zn(2+) serves as cofactor.

The enzyme catalyses RNA(n) + a ribonucleoside 5'-triphosphate = RNA(n+1) + diphosphate. Functionally, DNA-dependent RNA polymerase catalyzes the transcription of DNA into RNA using the four ribonucleoside triphosphates as substrates. This chain is DNA-directed RNA polymerase subunit beta', found in Limosilactobacillus fermentum (strain NBRC 3956 / LMG 18251) (Lactobacillus fermentum).